The chain runs to 319 residues: Protein-methionine-sulfoxide reductase catalytic subunit MsrP (319 aa).

The segment at residues 1–40 (MHKLNENDVTPEHIFFERRKIIQSMGLMGAASLLPRFSLA) is a signal peptide (tat-type signal). Mo-molybdopterin-binding positions include N73, 76–77 (YE), C131, T166, N218, R223, and 234–236 (NIK).

The protein belongs to the MsrP family. In terms of assembly, heterodimer of a catalytic subunit (MsrP) and a heme-binding subunit (MsrQ). The cofactor is Mo-molybdopterin. Predicted to be exported by the Tat system. The position of the signal peptide cleavage has not been experimentally proven.

Its subcellular location is the periplasm. The enzyme catalyses L-methionyl-[protein] + a quinone + H2O = L-methionyl-(S)-S-oxide-[protein] + a quinol. The catalysed reaction is L-methionyl-[protein] + a quinone + H2O = L-methionyl-(R)-S-oxide-[protein] + a quinol. Functionally, part of the MsrPQ system that repairs oxidized periplasmic proteins containing methionine sulfoxide residues (Met-O), using respiratory chain electrons. Thus protects these proteins from oxidative-stress damage caused by reactive species of oxygen and chlorine generated by the host defense mechanisms. MsrPQ is essential for the maintenance of envelope integrity under bleach stress, rescuing a wide series of structurally unrelated periplasmic proteins from methionine oxidation. The catalytic subunit MsrP is non-stereospecific, being able to reduce both (R-) and (S-) diastereoisomers of methionine sulfoxide. This chain is Protein-methionine-sulfoxide reductase catalytic subunit MsrP, found in Pasteurella multocida (strain Pm70).